The chain runs to 1548 residues: Lysine-specific demethylase 5D (1548 aa).

The JmjN domain maps to 14–55 (CPVFEPSWAEFRDPLGYIAKIRPIAEKSGICKIRPPADWQPP). An ARID domain is found at 79-169 (TRVKLNYLDQ…IIYPYEIFQS (91 aa)). Glycyl lysine isopeptide (Lys-Gly) (interchain with G-Cter in SUMO2) cross-links involve residues Lys-205, Lys-229, Lys-244, and Lys-279. Residues 208–229 (CYSRRGKRLQPEPEPTEEDIEK) form a disordered region. A phosphoserine mark is found at Ser-300 and Ser-316. The segment at 325–371 (VCRICSRGDEVDKFLLCDGCSDNYHIFCLLPPLSEVPKGVWRCPKCI) adopts a PHD-type 1 zinc-finger fold. Position 439 (Tyr-439) interacts with 2-oxoglutarate. The JmjC domain occupies 467–633 (EYAACGWNLN…VGRQCIEHYR (167 aa)). Fe cation is bound by residues His-513 and Glu-515. Residues Ser-521, Asn-523, and Lys-531 each coordinate 2-oxoglutarate. Fe cation is bound at residue His-601. The C5HC2 zinc finger occupies 706–758 (CIKCKTTCFLSALACYDCPDSLVCLSHINDLCKCSRNRQYLRYRYTLDELPAM). Phosphoserine occurs at positions 889 and 893. Lys-1123 participates in a covalent cross-link: Glycyl lysine isopeptide (Lys-Gly) (interchain with G-Cter in SUMO2). A PHD-type 2 zinc finger spans residues 1182–1243 (ICICGQVCAG…DTKFLCPLCM (62 aa)). A Phosphoserine modification is found at Ser-1355. The tract at residues 1438 to 1468 (KPENPGNWSEEQTPERRRQRRQKVVLSRKGE) is disordered.

The protein belongs to the JARID1 histone demethylase family. As to quaternary structure, interacts withPCGF6, MSH5, ZMYND8, AR. It depends on L-ascorbate as a cofactor. Fe(2+) serves as cofactor.

The protein resides in the nucleus. It carries out the reaction N(6),N(6),N(6)-trimethyl-L-lysyl(4)-[histone H3] + 3 2-oxoglutarate + 3 O2 = L-lysyl(4)-[histone H3] + 3 formaldehyde + 3 succinate + 3 CO2. Histone demethylase that specifically demethylates 'Lys-4' of histone H3, thereby playing a central role in histone code. Does not demethylate histone H3 'Lys-9', H3 'Lys-27', H3 'Lys-36', H3 'Lys-79' or H4 'Lys-20'. Demethylates trimethylated and dimethylated but not monomethylated H3 'Lys-4'. May play a role in spermatogenesis. Involved in transcriptional repression of diverse metastasis-associated genes; in this function seems to cooperate with ZMYND8. Suppresses prostate cancer cell invasion. Regulates androgen receptor (AR) transcriptional activity by demethylating H3K4me3 active transcription marks. The chain is Lysine-specific demethylase 5D (Kdm5d) from Mus musculus (Mouse).